The primary structure comprises 468 residues: Na(+)/H(+) antiporter (468 aa).

8 consecutive transmembrane segments (helical) span residues 12–32, 36–56, 81–96, 103–123, 133–153, 169–189, 204–224, and 258–278; these read HLALIVAGGFITFFCYFSEVF, LLVGEAVLGSITGLIFGPHAA, DVRVFASAIELPGAYF, IIVMLLPVMAYGWLVTAGFAY, GSLLIAGCITSTDPVLSALIV, LLIAESGCNDGMAVPFFYFAI, WVLLVVLYECAFGIFFGCVIG, and GIGTIIGVDDLLMSFFAGILF. N-linked (GlcNAc...) asparagine glycosylation occurs at Asn-287. A helical transmembrane segment spans residues 293–313; sequence VPAFIDQTFSLLFFTYYGTII. Asn-319 carries N-linked (GlcNAc...) asparagine glycosylation. Transmembrane regions (helical) follow at residues 320–340, 362–382, and 408–428; these read WSVEGLPVWRLIVFSILTLVC, ALFVGHFGPIGVCAVYMAFLA, and IIWPIISFVILSSIIVHGFSI. 2 positions are modified to phosphoserine: Ser-449 and Ser-451.

This sequence belongs to the fungal Na(+)/H(+) exchanger family.

It is found in the cell membrane. Sodium export from cell, takes up external protons in exchange for internal sodium ions. Involved in regulation of pH. The polypeptide is Na(+)/H(+) antiporter (Schizosaccharomyces pombe (strain 972 / ATCC 24843) (Fission yeast)).